The following is an 816-amino-acid chain: Lon protease (816 aa).

One can recognise a Lon N-terminal domain in the interval 27 to 221 (LPLLPIRDVV…KVNDLLAREH (195 aa)). Position 372 to 379 (372 to 379 (GPPGVGKT)) interacts with ATP. The region spanning 608–789 (KNEVGVVNGL…DEVLKLALEK (182 aa)) is the Lon proteolytic domain. Residues Ser695 and Lys738 contribute to the active site. The disordered stretch occupies residues 795-816 (PKGKAKPATPKVVVRPSKEISA). Residues 800-809 (KPATPKVVVR) are compositionally biased toward low complexity.

The protein belongs to the peptidase S16 family. As to quaternary structure, homohexamer. Organized in a ring with a central cavity.

The protein localises to the cytoplasm. The enzyme catalyses Hydrolysis of proteins in presence of ATP.. ATP-dependent serine protease that mediates the selective degradation of mutant and abnormal proteins as well as certain short-lived regulatory proteins. Required for cellular homeostasis and for survival from DNA damage and developmental changes induced by stress. Degrades polypeptides processively to yield small peptide fragments that are 5 to 10 amino acids long. Binds to DNA in a double-stranded, site-specific manner. The polypeptide is Lon protease (Trichlorobacter lovleyi (strain ATCC BAA-1151 / DSM 17278 / SZ) (Geobacter lovleyi)).